We begin with the raw amino-acid sequence, 444 residues long: Methylenetetrahydrofolate--tRNA-(uracil-5-)-methyltransferase TrmFO (444 aa).

Position 10–15 (10–15 (GAGLAG)) interacts with FAD.

Belongs to the MnmG family. TrmFO subfamily. It depends on FAD as a cofactor.

The protein resides in the cytoplasm. The catalysed reaction is uridine(54) in tRNA + (6R)-5,10-methylene-5,6,7,8-tetrahydrofolate + NADH + H(+) = 5-methyluridine(54) in tRNA + (6S)-5,6,7,8-tetrahydrofolate + NAD(+). The enzyme catalyses uridine(54) in tRNA + (6R)-5,10-methylene-5,6,7,8-tetrahydrofolate + NADPH + H(+) = 5-methyluridine(54) in tRNA + (6S)-5,6,7,8-tetrahydrofolate + NADP(+). Catalyzes the folate-dependent formation of 5-methyl-uridine at position 54 (M-5-U54) in all tRNAs. The protein is Methylenetetrahydrofolate--tRNA-(uracil-5-)-methyltransferase TrmFO of Streptococcus pneumoniae serotype 4 (strain ATCC BAA-334 / TIGR4).